The chain runs to 207 residues: Large ribosomal subunit protein uL4 (207 aa).

The tract at residues 44-85 is disordered; it reads MRQGTHKTKNRAEVSGGGRKPWRQKGTGRARQGSIRSPQWRG.

Belongs to the universal ribosomal protein uL4 family. As to quaternary structure, part of the 50S ribosomal subunit.

Its function is as follows. One of the primary rRNA binding proteins, this protein initially binds near the 5'-end of the 23S rRNA. It is important during the early stages of 50S assembly. It makes multiple contacts with different domains of the 23S rRNA in the assembled 50S subunit and ribosome. Forms part of the polypeptide exit tunnel. This chain is Large ribosomal subunit protein uL4, found in Geobacillus thermodenitrificans (strain NG80-2).